The following is a 501-amino-acid chain: Cytochrome P450 6j1 (501 aa).

C444 contacts heme.

Belongs to the cytochrome P450 family. The cofactor is heme.

It is found in the endoplasmic reticulum membrane. Its subcellular location is the microsome membrane. This chain is Cytochrome P450 6j1 (CYP6J1), found in Blattella germanica (German cockroach).